Consider the following 553-residue polypeptide: Formate--tetrahydrofolate ligase (553 aa).

65–72 (TPAGEGKS) is a binding site for ATP.

The protein belongs to the formate--tetrahydrofolate ligase family.

It catalyses the reaction (6S)-5,6,7,8-tetrahydrofolate + formate + ATP = (6R)-10-formyltetrahydrofolate + ADP + phosphate. It participates in one-carbon metabolism; tetrahydrofolate interconversion. This Brachyspira hyodysenteriae (strain ATCC 49526 / WA1) protein is Formate--tetrahydrofolate ligase.